The primary structure comprises 315 residues: Aspartate carbamoyltransferase catalytic subunit (315 aa).

2 residues coordinate carbamoyl phosphate: Arg-65 and Thr-66. Residue Lys-93 participates in L-aspartate binding. The carbamoyl phosphate site is built by Arg-115, His-145, and Gln-148. Residues Arg-179 and Arg-234 each coordinate L-aspartate. Carbamoyl phosphate-binding residues include Gly-275 and Pro-276.

Belongs to the aspartate/ornithine carbamoyltransferase superfamily. ATCase family. In terms of assembly, heterododecamer (2C3:3R2) of six catalytic PyrB chains organized as two trimers (C3), and six regulatory PyrI chains organized as three dimers (R2).

The enzyme catalyses carbamoyl phosphate + L-aspartate = N-carbamoyl-L-aspartate + phosphate + H(+). It functions in the pathway pyrimidine metabolism; UMP biosynthesis via de novo pathway; (S)-dihydroorotate from bicarbonate: step 2/3. Functionally, catalyzes the condensation of carbamoyl phosphate and aspartate to form carbamoyl aspartate and inorganic phosphate, the committed step in the de novo pyrimidine nucleotide biosynthesis pathway. This is Aspartate carbamoyltransferase catalytic subunit from Xanthomonas campestris pv. campestris (strain 8004).